Consider the following 470-residue polypeptide: Trigger factor (470 aa).

One can recognise a PPIase FKBP-type domain in the interval 164-243 (GDYVVIDMTA…VTAVKVQELP (80 aa)). 2 stretches are compositionally biased toward acidic residues: residues 424 to 438 (ETDA…ESVE) and 445 to 470 (AEDD…AAKA). The interval 424–470 (ETDAEDAAEGVESVEVDLSAAAEDDAEETSDEPAAEDTATEDEAAKA) is disordered.

This sequence belongs to the FKBP-type PPIase family. Tig subfamily.

It is found in the cytoplasm. The catalysed reaction is [protein]-peptidylproline (omega=180) = [protein]-peptidylproline (omega=0). Involved in protein export. Acts as a chaperone by maintaining the newly synthesized protein in an open conformation. Functions as a peptidyl-prolyl cis-trans isomerase. The protein is Trigger factor of Beutenbergia cavernae (strain ATCC BAA-8 / DSM 12333 / CCUG 43141 / JCM 11478 / NBRC 16432 / NCIMB 13614 / HKI 0122).